The sequence spans 398 residues: Putative F-box protein At4g17780 (398 aa).

One can recognise an F-box domain in the interval Pro8–Ser55.

In Arabidopsis thaliana (Mouse-ear cress), this protein is Putative F-box protein At4g17780.